Here is a 105-residue protein sequence, read N- to C-terminus: Urease subunit beta (105 aa).

Belongs to the urease beta subunit family. Heterotrimer of UreA (gamma), UreB (beta) and UreC (alpha) subunits. Three heterotrimers associate to form the active enzyme.

The protein resides in the cytoplasm. It catalyses the reaction urea + 2 H2O + H(+) = hydrogencarbonate + 2 NH4(+). Its pathway is nitrogen metabolism; urea degradation; CO(2) and NH(3) from urea (urease route): step 1/1. In Pseudomonas putida (strain GB-1), this protein is Urease subunit beta.